The sequence spans 359 residues: Glutamine synthetase (359 aa).

One can recognise a GS beta-grasp domain in the interval 28–107; it reads VMAEYIWIDG…VLAACYTADG (80 aa). Residues 114 to 359 form the GS catalytic domain; it reads HRDACAKLLE…GIITETMFEH (246 aa). Phosphoserine is present on Ser273. Phosphothreonine is present on Thr303. A Phosphoserine modification is found at Ser305.

This sequence belongs to the glutamine synthetase family. In terms of assembly, homooctamer.

It localises to the cytoplasm. The catalysed reaction is L-glutamate + NH4(+) + ATP = L-glutamine + ADP + phosphate + H(+). The polypeptide is Glutamine synthetase (gln1) (Schizosaccharomyces pombe (strain 972 / ATCC 24843) (Fission yeast)).